A 612-amino-acid chain; its full sequence is Glutamine--fructose-6-phosphate aminotransferase [isomerizing] (612 aa).

The Nucleophile; for GATase activity role is filled by C2. One can recognise a Glutamine amidotransferase type-2 domain in the interval 2–221; it reads CGIVGIVSQR…NGDIAEITNS (220 aa). SIS domains lie at 289–429 and 461–602; these read FNKT…IRKI and LVKN…VDHP. The For Fru-6P isomerization activity role is filled by K607.

Homodimer.

The protein resides in the cytoplasm. It carries out the reaction D-fructose 6-phosphate + L-glutamine = D-glucosamine 6-phosphate + L-glutamate. Functionally, catalyzes the first step in hexosamine metabolism, converting fructose-6P into glucosamine-6P using glutamine as a nitrogen source. The chain is Glutamine--fructose-6-phosphate aminotransferase [isomerizing] from Wigglesworthia glossinidia brevipalpis.